Consider the following 945-residue polypeptide: Leucine--tRNA ligase (945 aa).

A 'HIGH' region motif is present at residues 66–77 (PYPSGTGLHVGH). The 'KMSKS' region motif lies at 716-720 (KMGKS). Lys-719 contributes to the ATP binding site.

The protein belongs to the class-I aminoacyl-tRNA synthetase family.

The protein resides in the cytoplasm. The enzyme catalyses tRNA(Leu) + L-leucine + ATP = L-leucyl-tRNA(Leu) + AMP + diphosphate. This is Leucine--tRNA ligase from Rhodococcus jostii (strain RHA1).